The chain runs to 206 residues: Thiamine-phosphate synthase (206 aa).

Residues 36-40 (QLRMK) and asparagine 68 each bind 4-amino-2-methyl-5-(diphosphooxymethyl)pyrimidine. The Mg(2+) site is built by aspartate 69 and aspartate 88. Residue serine 106 participates in 4-amino-2-methyl-5-(diphosphooxymethyl)pyrimidine binding. 2-[(2R,5Z)-2-carboxy-4-methylthiazol-5(2H)-ylidene]ethyl phosphate is bound at residue 132–134 (TNT). Residue lysine 135 coordinates 4-amino-2-methyl-5-(diphosphooxymethyl)pyrimidine. 2-[(2R,5Z)-2-carboxy-4-methylthiazol-5(2H)-ylidene]ethyl phosphate is bound by residues glycine 162 and 182–183 (VS).

Belongs to the thiamine-phosphate synthase family. Mg(2+) serves as cofactor.

The catalysed reaction is 2-[(2R,5Z)-2-carboxy-4-methylthiazol-5(2H)-ylidene]ethyl phosphate + 4-amino-2-methyl-5-(diphosphooxymethyl)pyrimidine + 2 H(+) = thiamine phosphate + CO2 + diphosphate. It catalyses the reaction 2-(2-carboxy-4-methylthiazol-5-yl)ethyl phosphate + 4-amino-2-methyl-5-(diphosphooxymethyl)pyrimidine + 2 H(+) = thiamine phosphate + CO2 + diphosphate. It carries out the reaction 4-methyl-5-(2-phosphooxyethyl)-thiazole + 4-amino-2-methyl-5-(diphosphooxymethyl)pyrimidine + H(+) = thiamine phosphate + diphosphate. Its pathway is cofactor biosynthesis; thiamine diphosphate biosynthesis; thiamine phosphate from 4-amino-2-methyl-5-diphosphomethylpyrimidine and 4-methyl-5-(2-phosphoethyl)-thiazole: step 1/1. In terms of biological role, condenses 4-methyl-5-(beta-hydroxyethyl)thiazole monophosphate (THZ-P) and 2-methyl-4-amino-5-hydroxymethyl pyrimidine pyrophosphate (HMP-PP) to form thiamine monophosphate (TMP). The sequence is that of Thiamine-phosphate synthase from Methanococcus vannielii (strain ATCC 35089 / DSM 1224 / JCM 13029 / OCM 148 / SB).